A 149-amino-acid chain; its full sequence is MNHLHRLFRITQVDRPVLLAITRRLSSKVPTEPTWKEVDESKLPNPTKIDQDTIAHLERLALVDFANKEGIRRLEAAIRFADQMFLVDTTGVEPMDSVLEDRELYLRDDVVTEGNCKDDILRNAGKVVEDYFVAPPGNIPLPKKEEYDS.

Residues 1–25 (MNHLHRLFRITQVDRPVLLAITRRL) constitute a mitochondrion transit peptide.

The protein belongs to the GatC family. As to quaternary structure, subunit of the heterotrimeric GatCAB amidotransferase (AdT) complex, composed of A, B and C subunits.

The protein resides in the mitochondrion. The catalysed reaction is L-glutamyl-tRNA(Gln) + L-glutamine + ATP + H2O = L-glutaminyl-tRNA(Gln) + L-glutamate + ADP + phosphate + H(+). Allows the formation of correctly charged Gln-tRNA(Gln) through the transamidation of misacylated Glu-tRNA(Gln) in the mitochondria. The reaction takes place in the presence of glutamine and ATP through an activated gamma-phospho-Glu-tRNA(Gln). The polypeptide is Glutamyl-tRNA(Gln) amidotransferase subunit C, mitochondrial (Branchiostoma floridae (Florida lancelet)).